Reading from the N-terminus, the 162-residue chain is Protein A49 (162 aa).

Belongs to the poxviridae A49 protein family.

The protein is Protein A49 of Homo sapiens (Human).